Consider the following 228-residue polypeptide: Protein-L-isoaspartate O-methyltransferase (228 aa).

The interval 1–20 (MVAVSLKMSQPAAPPPPMGE) is disordered. The active site involves Ser76.

This sequence belongs to the methyltransferase superfamily. L-isoaspartyl/D-aspartyl protein methyltransferase family.

Its subcellular location is the cytoplasm. The enzyme catalyses [protein]-L-isoaspartate + S-adenosyl-L-methionine = [protein]-L-isoaspartate alpha-methyl ester + S-adenosyl-L-homocysteine. Catalyzes the methyl esterification of L-isoaspartyl residues in peptides and proteins that result from spontaneous decomposition of normal L-aspartyl and L-asparaginyl residues. It plays a role in the repair and/or degradation of damaged proteins. The polypeptide is Protein-L-isoaspartate O-methyltransferase (Magnetococcus marinus (strain ATCC BAA-1437 / JCM 17883 / MC-1)).